The following is a 300-amino-acid chain: NAD kinase (300 aa).

The active-site Proton acceptor is Asp75. NAD(+)-binding positions include 75–76 (DG), 149–150 (ND), Arg177, Asp179, 190–195 (TAYALS), Ala214, and Gln248.

This sequence belongs to the NAD kinase family. A divalent metal cation serves as cofactor.

Its subcellular location is the cytoplasm. It carries out the reaction NAD(+) + ATP = ADP + NADP(+) + H(+). Functionally, involved in the regulation of the intracellular balance of NAD and NADP, and is a key enzyme in the biosynthesis of NADP. Catalyzes specifically the phosphorylation on 2'-hydroxyl of the adenosine moiety of NAD to yield NADP. In Burkholderia lata (strain ATCC 17760 / DSM 23089 / LMG 22485 / NCIMB 9086 / R18194 / 383), this protein is NAD kinase.